A 202-amino-acid chain; its full sequence is uncharacterized protein (202 aa).

An HTH tetR-type domain is found at 14 to 74; it reads NAKTERILDV…AMADRYFQRC (61 aa).

This is an uncharacterized protein from Xanthobacter autotrophicus.